The primary structure comprises 568 residues: NADPH oxidase 3 (568 aa).

Topologically, residues 1 to 13 are cytoplasmic; sequence MMGCWILNEGLST. Residues 14–34 form a helical membrane-spanning segment; it reads ILVLSWLGINFYLFIDTFYWY. The Extracellular segment spans residues 35 to 51; it reads EEEESFHYTRVILGSTL. Residues 52–72 traverse the membrane as a helical segment; it reads AWARASALCLNFNCMLILIPV. Positions 55-284 constitute a Ferric oxidoreductase domain; it reads RASALCLNFN…VVLYACERII (230 aa). The Cytoplasmic portion of the chain corresponds to 73–103; sequence SRNLISFIRGTSICCRGPWRRQLDKNLRFHK. Residues 104–124 traverse the membrane as a helical segment; the sequence is LVAYGIAVNATIHIVAHFFNL. Over 125 to 167 the chain is Extracellular; that stretch reads ERYHWSQSEEAQGLLAALSKLGNTPNESYLNPVRTFPTNTTTE. N163 is a glycosylation site (N-linked (GlcNAc...) asparagine). A helical transmembrane segment spans residues 168–188; that stretch reads LLRTIAGVTGLVISLALVLIM. Residues 189-201 lie on the Cytoplasmic side of the membrane; that stretch reads TSSTEFIRQASYE. A helical transmembrane segment spans residues 202 to 222; sequence LFWYTHHVFIVFFLSLAIHGT. Over 223–395 the chain is Extracellular; sequence GRIVRGQTQD…DGPFGTALTD (173 aa). N-linked (GlcNAc...) asparagine glycosylation occurs at N238. Residues 285 to 395 enclose the FAD-binding FR-type domain; the sequence is RFWRFQQEVV…DGPFGTALTD (111 aa). Residues 396–416 form a helical membrane-spanning segment; that stretch reads VFHYPVCVCVAAGIGVTPFAA. The Cytoplasmic portion of the chain corresponds to 417–568; sequence LLKSIWYKCS…VHFYYNKESF (152 aa).

In terms of assembly, interacts with CYBA/p22phox. Heterodimerization with CYBA/p22phox is essential for its activity and cell membrane localization. Heme is required as a cofactor. Post-translationally, N-glycosylated in a CYBA/p22phox-dependent manner.

Its subcellular location is the cell membrane. It carries out the reaction NADPH + 2 O2 = 2 superoxide + NADP(+) + H(+). Its activity is regulated as follows. Activated by the ototoxic drug cisplatin. Activated by NOXO1. Cooperatively activated by NCF1 and NCF2 or NOXA1 in a phorbol 12-myristate 13-acetate (PMA)-dependent manner. Inhibited by diphenyleneiodonium chloride. In terms of biological role, NADPH oxidase that catalyzes the generation of superoxide from molecular oxygen utilizing NADPH as an electron donor, upon formation of a complex with CYBA/p22phox. Plays a role in the biogenesis of otoconia/otolith, which are crystalline structures of the inner ear involved in the perception of gravity. The sequence is that of NADPH oxidase 3 (NOX3) from Homo sapiens (Human).